The primary structure comprises 154 residues: Transcriptional repressor NrdR (154 aa).

A zinc finger lies at 3–34 (CPFCSAHDTKVIDSRLVAEGDQVRRRRECQAC). An ATP-cone domain is found at 49 to 139 (PRVIKQDGSR…VYRRFQDLNE (91 aa)).

Belongs to the NrdR family. Requires Zn(2+) as cofactor.

Its function is as follows. Negatively regulates transcription of bacterial ribonucleotide reductase nrd genes and operons by binding to NrdR-boxes. This chain is Transcriptional repressor NrdR, found in Azotobacter vinelandii (strain DJ / ATCC BAA-1303).